Consider the following 166-residue polypeptide: Putative esterase sll0410 (166 aa).

Asp-45 is an active-site residue.

It belongs to the 4-hydroxybenzoyl-CoA thioesterase family.

This Synechocystis sp. (strain ATCC 27184 / PCC 6803 / Kazusa) protein is Putative esterase sll0410.